The primary structure comprises 88 residues: Small ribosomal subunit protein bS16 (88 aa).

The protein belongs to the bacterial ribosomal protein bS16 family.

The sequence is that of Small ribosomal subunit protein bS16 from Syntrophomonas wolfei subsp. wolfei (strain DSM 2245B / Goettingen).